A 372-amino-acid chain; its full sequence is Testis-specific serine/threonine-protein kinase 5 (372 aa).

A Protein kinase domain is found at 27-302 (LLSSKKIGSG…LQQVAAHCWM (276 aa)). ATP is bound by residues 33–41 (IGSGAFSKV) and Lys-72. Asp-173 (proton acceptor) is an active-site residue. The segment at 314–372 (GAPREQDHSWSTVAPDNTEPDRDTRHARSKGSSSSSGRTSPRRPSLAQLCNTWKPAPEQ) is disordered. The span at 343–358 (KGSSSSSGRTSPRRPS) shows a compositional bias: low complexity.

Belongs to the protein kinase superfamily. CAMK Ser/Thr protein kinase family. Requires Mg(2+) as cofactor. Post-translationally, autophosphorylated.

The enzyme catalyses L-seryl-[protein] + ATP = O-phospho-L-seryl-[protein] + ADP + H(+). It catalyses the reaction L-threonyl-[protein] + ATP = O-phospho-L-threonyl-[protein] + ADP + H(+). Its activity is regulated as follows. Activated by phosphorylation on Thr-207, potentially by autophosphorylation. May be involved in a signaling pathway during male germ cell development or mature sperm function. The chain is Testis-specific serine/threonine-protein kinase 5 from Mus musculus (Mouse).